The primary structure comprises 496 residues: Glutathione reductase, cytosolic (496 aa).

Residues Ser32, Gly33, Glu52, Thr69, Cys70, and Lys78 each coordinate FAD. Ser32 provides a ligand contact to glutathione. A disulfide bridge connects residues Cys70 and Cys75. Tyr127 is a glutathione binding site. Gly143 contacts FAD. Gly208, Ile211, Glu214, Arg231, Arg237, and Gly294 together coordinate NADP(+). Residues Asp335 and Thr343 each coordinate FAD. Ala373 contacts NADP(+). Position 469 (His469) interacts with FAD. His469 (proton acceptor) is an active-site residue.

The protein belongs to the class-I pyridine nucleotide-disulfide oxidoreductase family. Homodimer. Requires FAD as cofactor.

The protein localises to the cytoplasm. It catalyses the reaction 2 glutathione + NADP(+) = glutathione disulfide + NADPH + H(+). Functionally, catalyzes the reduction of glutathione disulfide (GSSG) to reduced glutathione (GSH). Constitutes the major mechanism to maintain a high GSH:GSSG ratio in the cytosol. The sequence is that of Glutathione reductase, cytosolic (GRC2) from Oryza sativa subsp. japonica (Rice).